We begin with the raw amino-acid sequence, 634 residues long: Threonine--tRNA ligase (634 aa).

The region spanning 1 to 61 is the TGS domain; sequence MFEVKLKDGS…DSDCEVQFVK (61 aa). Residues 242 to 532 form a catalytic region; it reads DHRKIGKEMG…LIEHYAGKFP (291 aa). Zn(2+)-binding residues include C333, H384, and H509.

This sequence belongs to the class-II aminoacyl-tRNA synthetase family. As to quaternary structure, homodimer. Requires Zn(2+) as cofactor.

It localises to the cytoplasm. It carries out the reaction tRNA(Thr) + L-threonine + ATP = L-threonyl-tRNA(Thr) + AMP + diphosphate + H(+). Catalyzes the attachment of threonine to tRNA(Thr) in a two-step reaction: L-threonine is first activated by ATP to form Thr-AMP and then transferred to the acceptor end of tRNA(Thr). Also edits incorrectly charged L-seryl-tRNA(Thr). The sequence is that of Threonine--tRNA ligase from Finegoldia magna (strain ATCC 29328 / DSM 20472 / WAL 2508) (Peptostreptococcus magnus).